Reading from the N-terminus, the 150-residue chain is 6,7-dimethyl-8-ribityllumazine synthase (150 aa).

5-amino-6-(D-ribitylamino)uracil contacts are provided by residues phenylalanine 11, valine 43 to aspartate 45, and alanine 67 to isoleucine 69. Alanine 72 to threonine 73 contributes to the (2S)-2-hydroxy-3-oxobutyl phosphate binding site. The active-site Proton donor is histidine 75. Leucine 100 provides a ligand contact to 5-amino-6-(D-ribitylamino)uracil. Arginine 115 is a binding site for (2S)-2-hydroxy-3-oxobutyl phosphate.

Belongs to the DMRL synthase family.

The enzyme catalyses (2S)-2-hydroxy-3-oxobutyl phosphate + 5-amino-6-(D-ribitylamino)uracil = 6,7-dimethyl-8-(1-D-ribityl)lumazine + phosphate + 2 H2O + H(+). The protein operates within cofactor biosynthesis; riboflavin biosynthesis; riboflavin from 2-hydroxy-3-oxobutyl phosphate and 5-amino-6-(D-ribitylamino)uracil: step 1/2. Functionally, catalyzes the formation of 6,7-dimethyl-8-ribityllumazine by condensation of 5-amino-6-(D-ribitylamino)uracil with 3,4-dihydroxy-2-butanone 4-phosphate. This is the penultimate step in the biosynthesis of riboflavin. The sequence is that of 6,7-dimethyl-8-ribityllumazine synthase from Pyrobaculum arsenaticum (strain DSM 13514 / JCM 11321 / PZ6).